A 301-amino-acid chain; its full sequence is Acetyl-coenzyme A carboxylase carboxyl transferase subunit beta (301 aa).

The region spanning 25 to 294 is the CoA carboxyltransferase N-terminal domain; it reads LWIKDPSTGE…NSDAPEHEKT (270 aa). Residues 282-301 are disordered; it reads QPGNSDAPEHEKTEATDKAA. Residues 288–301 are compositionally biased toward basic and acidic residues; that stretch reads APEHEKTEATDKAA.

Belongs to the AccD/PCCB family. In terms of assembly, acetyl-CoA carboxylase is a heterohexamer composed of biotin carboxyl carrier protein (AccB), biotin carboxylase (AccC) and two subunits each of ACCase subunit alpha (AccA) and ACCase subunit beta (AccD).

It localises to the cytoplasm. It carries out the reaction N(6)-carboxybiotinyl-L-lysyl-[protein] + acetyl-CoA = N(6)-biotinyl-L-lysyl-[protein] + malonyl-CoA. It functions in the pathway lipid metabolism; malonyl-CoA biosynthesis; malonyl-CoA from acetyl-CoA: step 1/1. Its function is as follows. Component of the acetyl coenzyme A carboxylase (ACC) complex. Biotin carboxylase (BC) catalyzes the carboxylation of biotin on its carrier protein (BCCP) and then the CO(2) group is transferred by the transcarboxylase to acetyl-CoA to form malonyl-CoA. In Brucella anthropi (strain ATCC 49188 / DSM 6882 / CCUG 24695 / JCM 21032 / LMG 3331 / NBRC 15819 / NCTC 12168 / Alc 37) (Ochrobactrum anthropi), this protein is Acetyl-coenzyme A carboxylase carboxyl transferase subunit beta.